The sequence spans 403 residues: Basic leucine zipper 25 (403 aa).

Disordered regions lie at residues 13–128 (SFWP…APVV) and 156–259 (VKPE…EFDT). Residues 24 to 33 (PGSSSTPSPT) show a composition bias toward low complexity. Residues 56–69 (LSGSDSSPTTNTIE) show a composition bias toward polar residues. 2 stretches are compositionally biased toward low complexity: residues 115–128 (APSS…APVV) and 161–174 (SSAS…AQGS). A compositionally biased stretch (polar residues) spans 175–195 (IVAQTSPGASSVRFSPTTSTQ). Positions 212–226 (DSDDDDLDGDADNGD) are enriched in acidic residues. S213 carries the post-translational modification Phosphoserine. Positions 229-292 (DVKRARRMLS…DAAAVDNRIL (64 aa)) constitute a bZIP domain. The interval 231 to 250 (KRARRMLSNRESARRSRRRK) is basic motif. A Nuclear localization signal motif is present at residues 233 to 240 (ARRMLSNR). Positions 264–271 (LRAEHSTL) are leucine-zipper. Residues 332 to 345 (NTPSASSSIPPNSN) are compositionally biased toward low complexity. Disordered stretches follow at residues 332–361 (NTPS…SAGL) and 380–403 (EGMQ…NHKH). Residues 351–361 (ANSSTNTSAGL) show a composition bias toward polar residues.

This sequence belongs to the bZIP family. Homodimer. Forms a heterodimer with BZIP1, BZIP1, BZIP2, BZIP9, BZIP11, BZIP44, BZIP53 and BZIP63. Interacts with ABI3 and forms a complex made of ABI3, BZIP53 and BZIP25. Expressed in roots, shoots, stems, leaves, stipulae, siliques, seeds, pollen, and flowers.

It is found in the nucleus. Functionally, transcription factor that binds to the 5'-ACGT-3' box, especially present in G-box-like motif (5'-CCACGTGGCC-3'), ABRE elements, of seed storage protein (SSP) encoding gene promoters (e.g. At2S and CRU3) and promotes their expression in seeds when in complex with ABI3 and BZIP53. The chain is Basic leucine zipper 25 (BZIP25) from Arabidopsis thaliana (Mouse-ear cress).